Reading from the N-terminus, the 333-residue chain is Phenylalanine--tRNA ligase alpha subunit (333 aa).

Glu254 provides a ligand contact to Mg(2+).

The protein belongs to the class-II aminoacyl-tRNA synthetase family. Phe-tRNA synthetase alpha subunit type 1 subfamily. As to quaternary structure, tetramer of two alpha and two beta subunits. The cofactor is Mg(2+).

Its subcellular location is the cytoplasm. The catalysed reaction is tRNA(Phe) + L-phenylalanine + ATP = L-phenylalanyl-tRNA(Phe) + AMP + diphosphate + H(+). In Xylella fastidiosa (strain 9a5c), this protein is Phenylalanine--tRNA ligase alpha subunit (pheS).